An 87-amino-acid chain; its full sequence is Long neurotoxin LlLong (87 aa).

The signal sequence occupies residues 1–20; sequence KTLLLTLVVVTIICLDFGYT. 5 disulfide bridges follow: Cys-23–Cys-41, Cys-34–Cys-62, Cys-47–Cys-51, Cys-66–Cys-77, and Cys-78–Cys-83.

This sequence belongs to the three-finger toxin family. Long-chain subfamily. Type II alpha-neurotoxin sub-subfamily. As to expression, expressed by the venom gland.

It is found in the secreted. Its function is as follows. Binds with high affinity to muscular (alpha-1/CHRNA1) and neuronal (alpha-7/CHRNA7) nicotinic acetylcholine receptor (nAChR) and inhibits acetylcholine from binding to the receptor, thereby impairing neuromuscular and neuronal transmission. In Laticauda laticaudata (Blue-ringed sea krait), this protein is Long neurotoxin LlLong.